The primary structure comprises 121 residues: Spermidine export protein MdtJ (121 aa).

Helical transmembrane passes span 1–21 (MYIYWILLGLAIATEITGTLS), 32–52 (GGFILMLVMISLSYIFLSFAV), 55–75 (IALGVAYALWEGIGILFITLF), and 82–102 (ESLSLMKIAGLTTLVAGIVLI).

The protein belongs to the drug/metabolite transporter (DMT) superfamily. Small multidrug resistance (SMR) (TC 2.A.7.1) family. MdtJ subfamily. In terms of assembly, forms a complex with MdtI.

It is found in the cell inner membrane. Catalyzes the excretion of spermidine. The polypeptide is Spermidine export protein MdtJ (Escherichia coli O139:H28 (strain E24377A / ETEC)).